A 123-amino-acid chain; its full sequence is Ribosome-binding factor A (123 aa).

This sequence belongs to the RbfA family. Monomer. Binds 30S ribosomal subunits, but not 50S ribosomal subunits or 70S ribosomes.

The protein resides in the cytoplasm. Its function is as follows. One of several proteins that assist in the late maturation steps of the functional core of the 30S ribosomal subunit. Associates with free 30S ribosomal subunits (but not with 30S subunits that are part of 70S ribosomes or polysomes). Required for efficient processing of 16S rRNA. May interact with the 5'-terminal helix region of 16S rRNA. This Acetivibrio thermocellus (strain ATCC 27405 / DSM 1237 / JCM 9322 / NBRC 103400 / NCIMB 10682 / NRRL B-4536 / VPI 7372) (Clostridium thermocellum) protein is Ribosome-binding factor A.